The sequence spans 344 residues: Dihydroorotase (344 aa).

Zn(2+) contacts are provided by histidine 14 and histidine 16. Substrate is bound by residues 16 to 18 (HLR) and asparagine 42. Zn(2+) contacts are provided by lysine 100, histidine 137, and histidine 175. Lysine 100 bears the N6-carboxylysine mark. A substrate-binding site is contributed by histidine 137. Substrate is bound at residue leucine 220. Residue aspartate 248 participates in Zn(2+) binding. Aspartate 248 is a catalytic residue. The substrate site is built by histidine 252 and alanine 264.

This sequence belongs to the metallo-dependent hydrolases superfamily. DHOase family. Class II DHOase subfamily. As to quaternary structure, homodimer. The cofactor is Zn(2+).

The enzyme catalyses (S)-dihydroorotate + H2O = N-carbamoyl-L-aspartate + H(+). Its pathway is pyrimidine metabolism; UMP biosynthesis via de novo pathway; (S)-dihydroorotate from bicarbonate: step 3/3. In terms of biological role, catalyzes the reversible cyclization of carbamoyl aspartate to dihydroorotate. In Ralstonia nicotianae (strain ATCC BAA-1114 / GMI1000) (Ralstonia solanacearum), this protein is Dihydroorotase.